A 442-amino-acid chain; its full sequence is Enolase 1 (442 aa).

The interval 73-140 (KLIAKEIVGY…YNYLGGFNAH (68 aa)) is binds human collagen. Gln-163 is a (2R)-2-phosphoglycerate binding site. The active-site Proton donor is the Glu-205. 3 residues coordinate Mg(2+): Asp-242, Glu-290, and Asp-317. The (2R)-2-phosphoglycerate site is built by Lys-342, Arg-371, Ser-372, and Lys-393. The active-site Proton acceptor is Lys-342.

It belongs to the enolase family. Mg(2+) serves as cofactor.

The protein resides in the cytoplasm. Its subcellular location is the secreted. It is found in the cell surface. The enzyme catalyses (2R)-2-phosphoglycerate = phosphoenolpyruvate + H2O. It functions in the pathway carbohydrate degradation; glycolysis; pyruvate from D-glyceraldehyde 3-phosphate: step 4/5. Catalyzes the reversible conversion of 2-phosphoglycerate (2-PG) into phosphoenolpyruvate (PEP). It is essential for the degradation of carbohydrates via glycolysis. Its function is as follows. 'Moonlights' as a collagen receptor. Binds host (human) collagen, which may contribute to pathogenicity. The polypeptide is Enolase 1 (Lactiplantibacillus plantarum (strain ATCC BAA-793 / NCIMB 8826 / WCFS1) (Lactobacillus plantarum)).